We begin with the raw amino-acid sequence, 251 residues long: Metallo-beta-lactamase domain-containing protein 1 (251 aa).

Zn(2+) is bound by residues histidine 118, histidine 120, aspartate 122, histidine 123, histidine 173, aspartate 196, and histidine 235.

Belongs to the metallo-beta-lactamase superfamily. Glyoxalase II family. Homodimer. Requires Zn(2+) as cofactor.

The protein resides in the cytoplasm. The protein localises to the cytosol. It localises to the nucleus. The enzyme catalyses a ribonucleotidyl-ribonucleotide-RNA + H2O = a 3'-end ribonucleotide-RNA + a 5'-end 5'-phospho-ribonucleoside-RNA + H(+). Endoribonuclease that catalyzes the hydrolysis of histone-coding pre-mRNA 3'-end. Involved in histone pre-mRNA processing during the S-phase of the cell cycle, which is required for entering/progressing through S-phase. Cleaves histone pre-mRNA at a major and a minor cleavage site after the 5'-ACCCA-3' and the 5'-ACCCACA-3' sequence, respectively, and located downstream of the stem-loop. May require the presence of the HDE element located at the histone pre-RNA 3'-end to avoid non-specific cleavage. In Rattus norvegicus (Rat), this protein is Metallo-beta-lactamase domain-containing protein 1 (Mblac1).